A 464-amino-acid chain; its full sequence is Glutamate--tRNA ligase 1 (464 aa).

Positions 10–20 match the 'HIGH' region motif; that stretch reads PSPTGYLHIGG. The short motif at 238 to 242 is the 'KMSKS' region element; that stretch reads KLSKR. Lys-241 serves as a coordination point for ATP.

It belongs to the class-I aminoacyl-tRNA synthetase family. Glutamate--tRNA ligase type 1 subfamily. In terms of assembly, monomer.

The protein resides in the cytoplasm. The catalysed reaction is tRNA(Glu) + L-glutamate + ATP = L-glutamyl-tRNA(Glu) + AMP + diphosphate. Its function is as follows. Catalyzes the attachment of glutamate to tRNA(Glu) in a two-step reaction: glutamate is first activated by ATP to form Glu-AMP and then transferred to the acceptor end of tRNA(Glu). This Helicobacter hepaticus (strain ATCC 51449 / 3B1) protein is Glutamate--tRNA ligase 1.